A 593-amino-acid polypeptide reads, in one-letter code: Probable tripeptidyl-peptidase SED3 (593 aa).

A signal peptide spans 1–18; that stretch reads MLLRWHSVIPLFLAMTVA. The propeptide at 19 to 198 is removed in mature form; the sequence is FPNTYRTVVE…NLQAIYLSTN (180 aa). N-linked (GlcNAc...) asparagine glycosylation is found at Asn-204, Asn-261, and Asn-275. The Peptidase S53 domain maps to 206–592; that stretch reads TITPRCLREL…RILAKIVQHM (387 aa). Catalysis depends on charge relay system residues Glu-282 and Asp-286. A glycan (N-linked (GlcNAc...) asparagine) is linked at Asn-295. Residue Ser-496 is the Charge relay system of the active site. Residues Asp-538 and Ile-539 each coordinate Ca(2+). Asn-554 and Asn-566 each carry an N-linked (GlcNAc...) asparagine glycan. Ca(2+) contacts are provided by Gly-570 and Asp-572.

Requires Ca(2+) as cofactor.

The protein localises to the secreted. Its subcellular location is the extracellular space. It carries out the reaction Release of an N-terminal tripeptide from a polypeptide.. Functionally, secreted tripeptidyl-peptidase which degrades proteins at acidic pHs and is involved in virulence. This chain is Probable tripeptidyl-peptidase SED3 (SED3), found in Arthroderma benhamiae (strain ATCC MYA-4681 / CBS 112371) (Trichophyton mentagrophytes).